Here is an 89-residue protein sequence, read N- to C-terminus: Small ribosomal subunit protein uS15 (89 aa).

The protein belongs to the universal ribosomal protein uS15 family. As to quaternary structure, part of the 30S ribosomal subunit. Forms a bridge to the 50S subunit in the 70S ribosome, contacting the 23S rRNA.

In terms of biological role, one of the primary rRNA binding proteins, it binds directly to 16S rRNA where it helps nucleate assembly of the platform of the 30S subunit by binding and bridging several RNA helices of the 16S rRNA. Forms an intersubunit bridge (bridge B4) with the 23S rRNA of the 50S subunit in the ribosome. This is Small ribosomal subunit protein uS15 from Kineococcus radiotolerans (strain ATCC BAA-149 / DSM 14245 / SRS30216).